Here is a 655-residue protein sequence, read N- to C-terminus: p-hydroxybenzoic acid efflux pump subunit AaeB (655 aa).

Over 1 to 12 (MGIFSIANQHIR) the chain is Periplasmic. Residues 13-33 (FAVKLATAIVLALFVGFHFQL) form a helical membrane-spanning segment. Residues 34–37 (ETPR) are Cytoplasmic-facing. The chain crosses the membrane as a helical span at residues 38–58 (WAVLTAAIVAAGPAFAAGGEP). The Periplasmic portion of the chain corresponds to 59 to 68 (YSGAIRYRGF). Residues 69–89 (LRIIGTFIGCIAGLVIIIAMI) traverse the membrane as a helical segment. The Cytoplasmic segment spans residues 90–92 (RAP). The helical transmembrane segment at 93-113 (LLMILVCCIWAGFCTWISSLV) threads the bilayer. Residues 114–120 (RIENSYA) are Periplasmic-facing. A helical transmembrane segment spans residues 121 to 141 (WGLAGYTALIIVITIQPEPLL). Residues 142-151 (TPQFAVERCS) are Cytoplasmic-facing. The chain crosses the membrane as a helical span at residues 152–172 (EIVIGIVCAIMADLLFSPRSI). The Periplasmic segment spans residues 173 to 369 (KQEVDRELES…RTTLSCILGT (197 aa)). A helical membrane pass occupies residues 370–390 (LFWLWTGWTSGSGAMVMIAVV). Over 391–406 (TSLAMRLPNPRMVAID) the chain is Cytoplasmic. The helical transmembrane segment at 407–427 (FIYGTLAALPLGLLYFLVIIP) threads the bilayer. Residues 428–430 (NTQ) are Periplasmic-facing. A helical transmembrane segment spans residues 431-451 (QSMLLLCISLAVLGFFLGIEV). The Cytoplasmic segment spans residues 452–458 (QKRRLGS). Residues 459–479 (MGALASTINIIVLDNPMTFHF) traverse the membrane as a helical segment. At 480–481 (SQ) the chain is on the periplasmic side. A helical transmembrane segment spans residues 482–502 (FLDSALGQIVGCVLAFTVILL). The Cytoplasmic segment spans residues 503–655 (VRDKSRDRTG…HKYQHALTDS (153 aa)).

The protein belongs to the aromatic acid exporter ArAE (TC 2.A.85) family.

It localises to the cell inner membrane. Functionally, forms an efflux pump with AaeA. Could function as a metabolic relief valve, allowing to eliminate certain compounds when they accumulate to high levels in the cell. In Shigella flexneri, this protein is p-hydroxybenzoic acid efflux pump subunit AaeB.